A 130-amino-acid polypeptide reads, in one-letter code: Large ribosomal subunit protein eL34 (130 aa).

Residues 111 to 130 form a disordered region; that stretch reads KPVSKPPKIQKTAKAASKSK.

This sequence belongs to the eukaryotic ribosomal protein eL34 family.

The sequence is that of Large ribosomal subunit protein eL34 (RpL34) from Aedes albopictus (Asian tiger mosquito).